The following is an 84-amino-acid chain: Cytochrome b559 subunit alpha (84 aa).

The chain crosses the membrane as a helical span at residues 22-36; the sequence is VIHSITIPSLFVAGW. Position 24 (His24) interacts with heme.

It belongs to the PsbE/PsbF family. In terms of assembly, heterodimer of an alpha subunit and a beta subunit. PSII is composed of 1 copy each of membrane proteins PsbA, PsbB, PsbC, PsbD, PsbE, PsbF, PsbH, PsbI, PsbJ, PsbK, PsbL, PsbM, PsbT, PsbX, PsbY, PsbZ, Psb30/Ycf12, at least 3 peripheral proteins of the oxygen-evolving complex and a large number of cofactors. It forms dimeric complexes. Heme b is required as a cofactor.

The protein resides in the plastid. It is found in the chloroplast thylakoid membrane. Functionally, this b-type cytochrome is tightly associated with the reaction center of photosystem II (PSII). PSII is a light-driven water:plastoquinone oxidoreductase that uses light energy to abstract electrons from H(2)O, generating O(2) and a proton gradient subsequently used for ATP formation. It consists of a core antenna complex that captures photons, and an electron transfer chain that converts photonic excitation into a charge separation. This Gracilaria tenuistipitata var. liui (Red alga) protein is Cytochrome b559 subunit alpha.